The chain runs to 166 residues: NAD(P)H-quinone oxidoreductase subunit I, chloroplastic (166 aa).

4Fe-4S ferredoxin-type domains are found at residues 55-84 (GRIH…VDWK) and 95-124 (LNYS…MTEE). [4Fe-4S] cluster contacts are provided by Cys64, Cys67, Cys70, Cys74, Cys104, Cys107, Cys110, and Cys114.

Belongs to the complex I 23 kDa subunit family. NDH is composed of at least 16 different subunits, 5 of which are encoded in the nucleus. [4Fe-4S] cluster serves as cofactor.

It localises to the plastid. It is found in the chloroplast thylakoid membrane. It carries out the reaction a plastoquinone + NADH + (n+1) H(+)(in) = a plastoquinol + NAD(+) + n H(+)(out). It catalyses the reaction a plastoquinone + NADPH + (n+1) H(+)(in) = a plastoquinol + NADP(+) + n H(+)(out). Functionally, NDH shuttles electrons from NAD(P)H:plastoquinone, via FMN and iron-sulfur (Fe-S) centers, to quinones in the photosynthetic chain and possibly in a chloroplast respiratory chain. The immediate electron acceptor for the enzyme in this species is believed to be plastoquinone. Couples the redox reaction to proton translocation, and thus conserves the redox energy in a proton gradient. The polypeptide is NAD(P)H-quinone oxidoreductase subunit I, chloroplastic (Stevia rebaudiana (Stevia)).